The following is a 98-amino-acid chain: DNA-binding protein Fis (98 aa).

Positions 74–93 (QTRAALMMGINRGTLRKKLK) form a DNA-binding region, H-T-H motif.

Belongs to the transcriptional regulatory Fis family. In terms of assembly, homodimer.

Its function is as follows. Activates ribosomal RNA transcription. Plays a direct role in upstream activation of rRNA promoters. In Citrobacter koseri (strain ATCC BAA-895 / CDC 4225-83 / SGSC4696), this protein is DNA-binding protein Fis.